A 244-amino-acid polypeptide reads, in one-letter code: Pyridoxine 5'-phosphate synthase (244 aa).

Residue Asn7 participates in 3-amino-2-oxopropyl phosphate binding. Residue 9–10 (DH) participates in 1-deoxy-D-xylulose 5-phosphate binding. Arg18 is a 3-amino-2-oxopropyl phosphate binding site. His43 (proton acceptor) is an active-site residue. Residues Arg45 and His50 each contribute to the 1-deoxy-D-xylulose 5-phosphate site. The active-site Proton acceptor is Glu70. Thr100 contributes to the 1-deoxy-D-xylulose 5-phosphate binding site. His191 functions as the Proton donor in the catalytic mechanism. 3-amino-2-oxopropyl phosphate contacts are provided by residues Gly192 and 213–214 (GH).

This sequence belongs to the PNP synthase family. In terms of assembly, homooctamer; tetramer of dimers.

The protein resides in the cytoplasm. It carries out the reaction 3-amino-2-oxopropyl phosphate + 1-deoxy-D-xylulose 5-phosphate = pyridoxine 5'-phosphate + phosphate + 2 H2O + H(+). It functions in the pathway cofactor biosynthesis; pyridoxine 5'-phosphate biosynthesis; pyridoxine 5'-phosphate from D-erythrose 4-phosphate: step 5/5. Functionally, catalyzes the complicated ring closure reaction between the two acyclic compounds 1-deoxy-D-xylulose-5-phosphate (DXP) and 3-amino-2-oxopropyl phosphate (1-amino-acetone-3-phosphate or AAP) to form pyridoxine 5'-phosphate (PNP) and inorganic phosphate. The sequence is that of Pyridoxine 5'-phosphate synthase from Laribacter hongkongensis (strain HLHK9).